The following is a 513-amino-acid chain: ATP synthase subunit alpha (513 aa).

Residue 169 to 176 (GDRQIGKT) participates in ATP binding.

Belongs to the ATPase alpha/beta chains family. F-type ATPases have 2 components, CF(1) - the catalytic core - and CF(0) - the membrane proton channel. CF(1) has five subunits: alpha(3), beta(3), gamma(1), delta(1), epsilon(1). CF(0) has three main subunits: a(1), b(2) and c(9-12). The alpha and beta chains form an alternating ring which encloses part of the gamma chain. CF(1) is attached to CF(0) by a central stalk formed by the gamma and epsilon chains, while a peripheral stalk is formed by the delta and b chains.

It is found in the cell inner membrane. The catalysed reaction is ATP + H2O + 4 H(+)(in) = ADP + phosphate + 5 H(+)(out). Functionally, produces ATP from ADP in the presence of a proton gradient across the membrane. The alpha chain is a regulatory subunit. The polypeptide is ATP synthase subunit alpha (Francisella tularensis subsp. novicida (strain U112)).